The sequence spans 254 residues: MNAMTAFSLNGAAPLANADELEAALRQIGTARYHNLHPFHRLLHGGKLNKGQVQAWALNRYYYQSSIPIKDAVVISRFRDRATRVEWRHRIEDHDGDLGSEGGIERWLKLTEGLGLDSGYVESTQGILPATRFAVDAYVHFVRDRTPLEAIASSLTELFAPNLHEERIAGMLAHYDFVNPEIMSYFKRRLEQAPRDTDFALRYVKQHATTPAEREAVCNALIFKTNVLWAQLDALHHAYVDGHIPPGAFVPQGF.

This sequence belongs to the PqqC family.

It carries out the reaction 6-(2-amino-2-carboxyethyl)-7,8-dioxo-1,2,3,4,7,8-hexahydroquinoline-2,4-dicarboxylate + 3 O2 = pyrroloquinoline quinone + 2 H2O2 + 2 H2O + H(+). It participates in cofactor biosynthesis; pyrroloquinoline quinone biosynthesis. Its function is as follows. Ring cyclization and eight-electron oxidation of 3a-(2-amino-2-carboxyethyl)-4,5-dioxo-4,5,6,7,8,9-hexahydroquinoline-7,9-dicarboxylic-acid to PQQ. This is Pyrroloquinoline-quinone synthase from Rhodopseudomonas palustris (strain TIE-1).